The sequence spans 42 residues: Photosystem I reaction center subunit IX (42 aa).

Residues 7 to 27 (YLSTAPVIATIWFGFLAGLLI) traverse the membrane as a helical segment.

The protein belongs to the PsaJ family.

It is found in the plastid. It localises to the chloroplast thylakoid membrane. Functionally, may help in the organization of the PsaE and PsaF subunits. This Chaetosphaeridium globosum (Charophycean green alga) protein is Photosystem I reaction center subunit IX.